Here is a 635-residue protein sequence, read N- to C-terminus: Threonine--tRNA ligase (635 aa).

One can recognise a TGS domain in the interval 1–61 (MINISFPDGS…DNDCKLRILT (61 aa)). Positions 242 to 533 (DHRKLGRELD…LIEEYAGRFP (292 aa)) are catalytic. 3 residues coordinate Zn(2+): Cys333, His384, and His510.

The protein belongs to the class-II aminoacyl-tRNA synthetase family. In terms of assembly, homodimer. Zn(2+) serves as cofactor.

Its subcellular location is the cytoplasm. It catalyses the reaction tRNA(Thr) + L-threonine + ATP = L-threonyl-tRNA(Thr) + AMP + diphosphate + H(+). In terms of biological role, catalyzes the attachment of threonine to tRNA(Thr) in a two-step reaction: L-threonine is first activated by ATP to form Thr-AMP and then transferred to the acceptor end of tRNA(Thr). Also edits incorrectly charged L-seryl-tRNA(Thr). The chain is Threonine--tRNA ligase from Rickettsia africae (strain ESF-5).